We begin with the raw amino-acid sequence, 469 residues long: Phosphatidylcholine:ceramide cholinephosphotransferase 1 (469 aa).

Positions 40 to 177 are disordered; the sequence is TTKIGPKLET…GDKPASPHDR (138 aa). Basic and acidic residues-rich tracts occupy residues 72-91, 100-117, and 162-177; these read AAEK…HEET, SHHD…GDGK, and VRLE…PHDR. 6 helical membrane-spanning segments follow: residues 186-206, 231-251, 262-282, 300-320, 327-347, and 355-375; these read LVAF…LSWI, LRLC…LILF, LCFI…VTPV, TFSL…LNLF, LCGD…ALFI, and FYIL…FLVL. H336 is a catalytic residue. At 376-469 the chain is on the cytoplasmic side; it reads SHGHYTIDVI…RNGAARPAFE (94 aa). Residues H379 and D383 contribute to the active site.

It belongs to the sphingomyelin synthase family.

Its subcellular location is the golgi apparatus membrane. The catalysed reaction is an N-acylsphing-4-enine + a 1,2-diacyl-sn-glycero-3-phosphocholine = a sphingomyelin + a 1,2-diacyl-sn-glycerol. It catalyses the reaction an N-acyl-15-methylhexadecasphing-4-enine + a 1,2-diacyl-sn-glycero-3-phosphocholine = an N-acyl-15-methylhexadecasphing-4-enine-1-phosphocholine + a 1,2-diacyl-sn-glycerol. Its pathway is lipid metabolism; sphingolipid metabolism. In terms of biological role, sphingomyelin synthases (SM synthase or SMS) synthesize the sphingolipid sphingomyelin (SM) through transfer of the phosphatidyl head group of 1,2-diacyl-sn-glycero-3-phosphocholine (phosphatidylcholine, PC) on to the primary hydroxyl of ceramide (N-acylsphingoid base), yielding 1,2-diacyl-sn-glycerol (diacylglycerol, DAG) as a side product. Functions as a bidirectional lipid cholinephosphotransferases capable of converting PC and ceramide to SM and DAG and vice versa depending on the respective levels of ceramide and DAG as phosphocholine acceptors, respectively. This chain is Phosphatidylcholine:ceramide cholinephosphotransferase 1 (sms-1), found in Caenorhabditis elegans.